The sequence spans 260 residues: Ribonuclease HII (260 aa).

Residues 71-259 (ELVAGVDEVG…VHDAIVNKKN (189 aa)) form the RNase H type-2 domain. A divalent metal cation contacts are provided by D77, E78, and D169.

This sequence belongs to the RNase HII family. Mn(2+) serves as cofactor. It depends on Mg(2+) as a cofactor.

It localises to the cytoplasm. It catalyses the reaction Endonucleolytic cleavage to 5'-phosphomonoester.. Functionally, endonuclease that specifically degrades the RNA of RNA-DNA hybrids. The protein is Ribonuclease HII of Leuconostoc citreum (strain KM20).